A 237-amino-acid polypeptide reads, in one-letter code: ATP synthase subunit a (237 aa).

Helical transmembrane passes span 18-38, 77-97, 103-123, 132-152, 185-205, and 209-229; these read STLW…VGTL, IFTL…PMAF, IAVT…LGFM, LFWV…IEVI, LILF…AIVA, and LEIL…CVYL.

The protein belongs to the ATPase A chain family. As to quaternary structure, F-type ATPases have 2 components, CF(1) - the catalytic core - and CF(0) - the membrane proton channel. CF(1) has five subunits: alpha(3), beta(3), gamma(1), delta(1), epsilon(1). CF(0) has three main subunits: a(1), b(2) and c(9-12). The alpha and beta chains form an alternating ring which encloses part of the gamma chain. CF(1) is attached to CF(0) by a central stalk formed by the gamma and epsilon chains, while a peripheral stalk is formed by the delta and b chains.

The protein resides in the cellular chromatophore membrane. Key component of the proton channel; it plays a direct role in the translocation of protons across the membrane. This is ATP synthase subunit a from Rhodobacter capsulatus (Rhodopseudomonas capsulata).